Here is a 310-residue protein sequence, read N- to C-terminus: Acetaldehyde dehydrogenase 1 (310 aa).

Ser12–Ile15 contacts NAD(+). The active-site Acyl-thioester intermediate is Cys132. NAD(+) is bound by residues Ser163–Asn171 and Asn287.

This sequence belongs to the acetaldehyde dehydrogenase family.

The catalysed reaction is acetaldehyde + NAD(+) + CoA = acetyl-CoA + NADH + H(+). This is Acetaldehyde dehydrogenase 1 from Pseudomonas putida (strain W619).